Here is a 483-residue protein sequence, read N- to C-terminus: MDPNIMWQARNDGSGLLEEDIQQLRSSIRGTVVLKNEASEEEYNAAVTRWNNVSIRLATLVVYVEDEQDIVKCVEFVNKHYLDVAVCSHGRHSYHGASSSTGMVIDLGRMRKVSVDKEAMTVTAQGGCIARDVELPLEAEGLAAVFGAVNETGVGFLTGAHGLAADNLVSARMVLANGQVVTASDDENSDLFWAIRGAGPNFGIVTEFKYRVHKQGPVFWQMLFYSPDKLKDCVSIVNQMHNISLAQKGGDFQVMMCYLTPPGYPDLHPGLRIFYNGPEEKAKELAAPAYALGPLSVSGGMCSFSDTTRIPPYLEFEGFDRYAASSAHLDYPLDEDLLLEVFTMFRNVIHKYGHHLLHPSKCILDLRNYEKVASVPIDATAYSGRFDVAWMIPDLQWDDPAMDSTMRMEVTSITAHIRERVREAKGDHVSGPRDATAIYPNISAGGEEKAKSVFGPNLPRLRVLKRKYDPNFIWNKWFPIVPA.

An FAD-binding PCMH-type domain is found at 54 to 215; the sequence is SIRLATLVVY…TEFKYRVHKQ (162 aa).

The protein belongs to the oxygen-dependent FAD-linked oxidoreductase family. Requires FAD as cofactor.

It functions in the pathway pigment biosynthesis. Its pathway is secondary metabolite biosynthesis. In terms of biological role, FAD-linked oxidoreductase; part of the gene cluster that mediates the biosynthesis of pleosporalin A, ascomycone A, as well as a third cryptic naphthoquinone derived pigment, all responsible for the coloration of conidia. Essential for the production of pleosporalin A, but not the 2 other final products. The pathway begins with the biosynthesis of the cyclized heptaketide 3-acetonyl-1,6,8-trihydroxy-2-naphthaldehyde by the NR-PKS pgmA. The C-6 hydroxyl group is further methylated by the O-methyltransferase pgmB to yield fusarubinaldehyde which is in turn oxidized by the cytochrome P450 monooxygenase pgmC at C-9. The C-1 hydroxyl group is then methylated spontaneously. Although pgmE, pgmD and pgmH are essential for the production of pleosporalin A, it is not the case for the 2 other final products and it remains difficult to assign a specific function to each enzyme. PgmF and pgmG seem not to be involved in pigment biosynthesis although they were regulated by the cluster-specific transcription factor pgmR. The polypeptide is FAD-linked oxidoreductase pgmH (Aspergillus terreus (strain NIH 2624 / FGSC A1156)).